Here is a 146-residue protein sequence, read N- to C-terminus: Cytochrome c' (146 aa).

Residues 1–21 (MKLRIATIAGLVVLGSGFAVA) form the signal peptide. Heme c-binding residues include R29, T86, A87, C134, C137, and H138.

In terms of assembly, monomer. Binds 1 heme c group covalently per subunit.

Cytochrome c' is the most widely occurring bacterial c-type cytochrome. Cytochromes c' are high-spin proteins and the heme has no sixth ligand. Their exact function is not known. The sequence is that of Cytochrome c' (cycA) from Rhodopseudomonas palustris (strain ATCC BAA-98 / CGA009).